The sequence spans 214 residues: Thiopurine S-methyltransferase (214 aa).

S-adenosyl-L-methionine-binding residues include tryptophan 10, leucine 44, glutamate 65, and arginine 122.

It belongs to the class I-like SAM-binding methyltransferase superfamily. TPMT family.

It is found in the cytoplasm. The enzyme catalyses S-adenosyl-L-methionine + a thiopurine = S-adenosyl-L-homocysteine + a thiopurine S-methylether.. This is Thiopurine S-methyltransferase from Teredinibacter turnerae (strain ATCC 39867 / T7901).